The sequence spans 455 residues: tRNA-2-methylthio-N(6)-dimethylallyladenosine synthase (455 aa).

The region spanning 18-133 (KKLFIETYGC…LPELIAAVEA (116 aa)) is the MTTase N-terminal domain. [4Fe-4S] cluster-binding residues include Cys-27, Cys-63, Cys-97, Cys-171, Cys-175, and Cys-178. In terms of domain architecture, Radical SAM core spans 157–390 (CGNHISGFVS…IALQNRLSAE (234 aa)). A TRAM domain is found at 393 to 455 (QRCIGKTYEV…SSATLKGEEV (63 aa)).

This sequence belongs to the methylthiotransferase family. MiaB subfamily. In terms of assembly, monomer. The cofactor is [4Fe-4S] cluster.

It is found in the cytoplasm. It carries out the reaction N(6)-dimethylallyladenosine(37) in tRNA + (sulfur carrier)-SH + AH2 + 2 S-adenosyl-L-methionine = 2-methylsulfanyl-N(6)-dimethylallyladenosine(37) in tRNA + (sulfur carrier)-H + 5'-deoxyadenosine + L-methionine + A + S-adenosyl-L-homocysteine + 2 H(+). In terms of biological role, catalyzes the methylthiolation of N6-(dimethylallyl)adenosine (i(6)A), leading to the formation of 2-methylthio-N6-(dimethylallyl)adenosine (ms(2)i(6)A) at position 37 in tRNAs that read codons beginning with uridine. In Bacteroides thetaiotaomicron (strain ATCC 29148 / DSM 2079 / JCM 5827 / CCUG 10774 / NCTC 10582 / VPI-5482 / E50), this protein is tRNA-2-methylthio-N(6)-dimethylallyladenosine synthase.